The primary structure comprises 373 residues: Cyclin-A3-1 (373 aa).

Residues 50-80 are disordered; sequence AVVLKPQPAPRGGKRAASHAAEPKKPAPPPA.

It belongs to the cyclin family. Cyclin AB subfamily.

This Oryza sativa subsp. japonica (Rice) protein is Cyclin-A3-1 (CYCA3-1).